The sequence spans 1079 residues: MDDDDDSCLLDLIGDPQALNYFLHGPSNKSSNDDLTNAGYSAANSNSIFANSSNADPKSSLKGVSNQLGEGPSDGLPLSSSLQFLEDELESSPLPDLTEDQPFDILQKSLQEANITEQTLAEEAYLDASIGSSQQFAQAQLHPSSSASFTQASNVSNYSGQTLQPIGVTHVPVGASFASNTVGVQHGFMQHVGISVPSQHLSNSSQISGSGQIQLIGSFGNHPSMMTINNLDGSQIILKGSGQQAPSNVSGGLLVHRQTPNGNSLFGNSSSSPVAQPVTVPFNSTNFQTSLPVHNIIIQRGLAPNSNKVPINIQPKPIQMGQQNTYNVNNLGIQQHHVQQGISFASASSPQGSVVGPHMSVNIVNQQNTRKPVTSQAVSSTGGSIVIHSPMGQPHAPQSQFLIPTSLSVSSNSVHHVQTINGQLLQTQPSQLISGQVASEHVMLNRNSSNMLRTNQPYTGPMLNNQNTAVHLVSGQTFAASGSPVIANHASPQLVGGQMPLQQASPTVLHLSPGQSSVSQGRPGFATMPSVTSMSGPSRFPAVSSASTAHPSLGSAVQSGSSGSNFTGDQLTQPNRTPVPVSVSHRLPVSSSKSTSTFSNTPGTGTQQQFFCQAQKKCLNQTSPISAPKTTDGLRQAQIPGLLSTTLPGQDSGSKVISASLGTAQPQQEKVVGSSPGHPAVQVESHSGGQKRPAAKQLTKGAFILQQLQRDQAHTVTPDKSHFRSLSDAVQRLLSYHVCQGSMPTEEDLRKVDNEFETVATQLLKRTQAMLNKYRCLLLEDAMRINPSAEMVMIDRMFNQEERASLSRDKRLALVDPEGFQADFCCSFKLDKAAHETQFGRSDQHGSKASSSLQPPAKAQGRDRAKTGVTEPMNHDQFHLVPNHIVVSAEGNISKKTECLGRALKFDKVGLVQYQSTSEEKASRREPLKASQCSPGPEGHRKTSSRSDHGTESKLSSILADSHLEMTCNNSFQDKSLRNSPKNEVLHTDIMKGSGEPQPDLQLTKSLETTFKNILELKKAGRQPQSDPTVSGSVELDFPNFSPMASQENCLEKFIPDHSEGVVETDSILEAAVNSILEC.

Disordered regions lie at residues 51 to 79 (NSSN…LPLS) and 509 to 604 (LHLS…TPGT). Residues 68 to 79 (LGEGPSDGLPLS) are compositionally biased toward low complexity. The segment covering 544–576 (SSASTAHPSLGSAVQSGSSGSNFTGDQLTQPNR) has biased composition (polar residues). Residues 590-604 (SSSKSTSTFSNTPGT) show a composition bias toward low complexity. S623 carries the phosphoserine modification. Disordered regions lie at residues 669–691 (EKVV…GGQK), 837–877 (TQFG…NHDQ), and 917–954 (TSEE…TESK). Composition is skewed to basic and acidic residues over residues 918–928 (SEEKASRREPL) and 938–952 (EGHR…HGTE). Phosphoserine is present on S980.

In terms of assembly, component of the multiprotein chromatin-remodeling complexes SWI/SNF: SWI/SNF-A (BAF), SWI/SNF-B (PBAF) and related complexes. The canonical complex contains a catalytic subunit (either SMARCA4/BRG1/BAF190A or SMARCA2/BRM/BAF190B) and at least SMARCE1, ACTL6A/BAF53, SMARCC1/BAF155, SMARCC2/BAF170, and SMARCB1/SNF5/BAF47. Other subunits specific to each of the complexes may also be present permitting several possible combinations developmentally and tissue specific. Component of the SWI/SNF (GBAF) subcomplex, which includes at least BICRA or BICRAL (mutually exclusive), BRD9, SS18, the core BAF subunits, SMARCA2/BRM, SMARCA4/BRG1/BAF190A, ACTL6A/BAF53, SMARCC1/BAF155, and SMARCD1/BAF60A.

Its function is as follows. Component of SWI/SNF chromatin remodeling subcomplex GBAF that carries out key enzymatic activities, changing chromatin structure by altering DNA-histone contacts within a nucleosome in an ATP-dependent manner. This is BRD4-interacting chromatin-remodeling complex-associated protein-like from Homo sapiens (Human).